The chain runs to 125 residues: Small ribosomal subunit protein mS41 (125 aa).

Residues 1 to 23 constitute a mitochondrion transit peptide; it reads MLFRRLFSSSVIVQAASKTSLRK.

The protein belongs to the mitochondrion-specific ribosomal protein mS41 family.

It is found in the mitochondrion. Involved in telomere length regulation. The sequence is that of Small ribosomal subunit protein mS41 (FYV4) from Kluyveromyces lactis (strain ATCC 8585 / CBS 2359 / DSM 70799 / NBRC 1267 / NRRL Y-1140 / WM37) (Yeast).